The primary structure comprises 357 residues: Magnesium-chelatase subunit ChlI (357 aa).

Gly47–Ser54 is a binding site for ATP.

Belongs to the Mg-chelatase subunits D/I family.

The enzyme catalyses protoporphyrin IX + Mg(2+) + ATP + H2O = Mg-protoporphyrin IX + ADP + phosphate + 3 H(+). It functions in the pathway porphyrin-containing compound metabolism; chlorophyll biosynthesis. Functionally, involved in chlorophyll biosynthesis; introduces a magnesium ion into protoporphyrin IX to yield Mg-protoporphyrin IX. This Synechocystis sp. (strain ATCC 27184 / PCC 6803 / Kazusa) protein is Magnesium-chelatase subunit ChlI (chlI).